The sequence spans 211 residues: Peroxiredoxin (211 aa).

In terms of domain architecture, Thioredoxin spans 2–156 (PLLGDDFPEL…ILRAVKVLQI (155 aa)). Cys-44 acts as the Cysteine sulfenic acid (-SOH) intermediate in catalysis. Arg-119 lines the substrate pocket. A disulfide bridge connects residues Cys-199 and Cys-205.

It belongs to the peroxiredoxin family. Prx6 subfamily. Homodecamer. Pentamer of dimers that assemble into a ring structure.

It localises to the cytoplasm. It catalyses the reaction a hydroperoxide + [thioredoxin]-dithiol = an alcohol + [thioredoxin]-disulfide + H2O. Its function is as follows. Thiol-specific peroxidase that catalyzes the reduction of hydrogen peroxide and organic hydroperoxides to water and alcohols, respectively. Plays a role in cell protection against oxidative stress by detoxifying peroxides. The protein is Peroxiredoxin of Chlorobaculum tepidum (strain ATCC 49652 / DSM 12025 / NBRC 103806 / TLS) (Chlorobium tepidum).